The chain runs to 506 residues: MKEYQVYLERSRSRQQDFLYPLLFREYIYGLAYSHHFHRSIFLENVGYDNKYSLLIVKRLITRMYQQNHLIISANDSPKNPFWGYNKNLDCQIISEGFAIVVEIPFFRQLSSSFEEAEILKSFKNLRSIHSIFPFLEDKFTYLNYVSDIRIPYPIHLEILVQILRYWVKDAPFFHLLRLFLYHFCNWNSFISTKKWISTFSKSNPRLFLFLHNFYVCEYEYILVFLRNKSSHLGFKSFSIFFERIFFYGKREHLGKVFAKDFSYPLTFFKDPNIHYVRYQGKCILASKNAPFLMNKWKHYFIHLWQCFFDVWSQPRMININPLSEHSFQLLGYFSNVRLNRSVVRSQMLQNTFLIEIVIKKLDIIVPIIPLIRSLAKAKFCNVLGEPISKPVWADSSDFDIIDRFLRICRNLSHYYNGSSKKKSLYRIKYILRLSCIKTLACKHKSTVRAFLKRSGSEELLQEFFTEEEEIISLIFPRDSSTLQRLHRNRIWYLDILFSNDLVHDE.

Belongs to the intron maturase 2 family. MatK subfamily.

The protein resides in the plastid. It localises to the chloroplast. In terms of biological role, usually encoded in the trnK tRNA gene intron. Probably assists in splicing its own and other chloroplast group II introns. The sequence is that of Maturase K from Pisum sativum (Garden pea).